The following is a 608-amino-acid chain: UvrABC system protein C (608 aa).

Residues 16–94 (NRPGVYRMFD…IKEWRPPYNI (79 aa)) enclose the GIY-YIG domain. Positions 204-239 (NALADELNVGMEQAAMRLDFEKAAELRDQVAILRRV) constitute a UVR domain.

The protein belongs to the UvrC family. As to quaternary structure, interacts with UvrB in an incision complex.

Its subcellular location is the cytoplasm. The UvrABC repair system catalyzes the recognition and processing of DNA lesions. UvrC both incises the 5' and 3' sides of the lesion. The N-terminal half is responsible for the 3' incision and the C-terminal half is responsible for the 5' incision. In Pseudomonas aeruginosa (strain LESB58), this protein is UvrABC system protein C.